The sequence spans 91 residues: DNA/RNA-binding protein Alba (91 aa).

The protein belongs to the histone-like Alba family.

It localises to the cytoplasm. The protein resides in the chromosome. Binds double-stranded DNA tightly but without sequence specificity. Involved in DNA compaction. The chain is DNA/RNA-binding protein Alba from Methanoculleus marisnigri (strain ATCC 35101 / DSM 1498 / JR1).